A 203-amino-acid polypeptide reads, in one-letter code: Small ribosomal subunit protein uS4c (203 aa).

In terms of domain architecture, S4 RNA-binding spans 91-154 (MRLDNIIFRL…KYESIISKNI (64 aa)).

It belongs to the universal ribosomal protein uS4 family. Part of the 30S ribosomal subunit. Contacts protein S5. The interaction surface between S4 and S5 is involved in control of translational fidelity.

It localises to the plastid. Its subcellular location is the chloroplast. Its function is as follows. One of the primary rRNA binding proteins, it binds directly to 16S rRNA where it nucleates assembly of the body of the 30S subunit. Functionally, with S5 and S12 plays an important role in translational accuracy. The polypeptide is Small ribosomal subunit protein uS4c (rps4) (Lopidium struthiopteris (Moss)).